A 257-amino-acid polypeptide reads, in one-letter code: uncharacterized protein (257 aa).

6 consecutive transmembrane segments (helical) span residues 23-43 (VLTD…EGLL), 79-99 (FIFI…VLGA), 131-151 (TFGI…AFSV), 158-178 (FAVS…ILMM), 199-219 (AFVL…HYEM), and 221-241 (HSVF…IHYI).

This sequence belongs to the TerC family.

Its subcellular location is the cell membrane. This is an uncharacterized protein from Bacillus subtilis (strain 168).